The chain runs to 261 residues: Putative hydro-lyase SAR11_0660 (261 aa).

The protein belongs to the D-glutamate cyclase family.

The chain is Putative hydro-lyase SAR11_0660 from Pelagibacter ubique (strain HTCC1062).